The sequence spans 569 residues: Pyrophosphate--fructose 6-phosphate 1-phosphotransferase subunit beta (569 aa).

A diphosphate-binding site is contributed by glycine 107. Aspartate 201 is a Mg(2+) binding site. Residues 229 to 231 (TID), 268 to 269 (KY), 276 to 278 (MGR), glutamate 337, and 442 to 445 (YEGR) each bind substrate. Catalysis depends on aspartate 231, which acts as the Proton acceptor.

Belongs to the phosphofructokinase type A (PFKA) family. PPi-dependent PFK group II subfamily. Clade 'Long' sub-subfamily. As to quaternary structure, tetramer of two alpha (regulatory) and two beta (catalytic) chains. Requires Mg(2+) as cofactor.

It is found in the cytoplasm. The enzyme catalyses beta-D-fructose 6-phosphate + diphosphate = beta-D-fructose 1,6-bisphosphate + phosphate + H(+). Its pathway is carbohydrate degradation; glycolysis; D-glyceraldehyde 3-phosphate and glycerone phosphate from D-glucose: step 3/4. Allosterically activated by fructose 2,6-bisphosphate. Catalytic subunit of pyrophosphate--fructose 6-phosphate 1-phosphotransferase. Catalyzes the phosphorylation of D-fructose 6-phosphate, the first committing step of glycolysis. Uses inorganic phosphate (PPi) as phosphoryl donor instead of ATP like common ATP-dependent phosphofructokinases (ATP-PFKs), which renders the reaction reversible, and can thus function both in glycolysis and gluconeogenesis. The sequence is that of Pyrophosphate--fructose 6-phosphate 1-phosphotransferase subunit beta from Solanum tuberosum (Potato).